Reading from the N-terminus, the 253-residue chain is Dehydration-responsive element-binding protein 1D (253 aa).

A compositionally biased stretch (polar residues) spans 1–22; it reads MEKNTAASGQLMTSSAEATPSS. A disordered region spans residues 1–31; it reads MEKNTAASGQLMTSSAEATPSSPKRPAGRTK. Positions 39–98 form a DNA-binding region, AP2/ERF; that stretch reads VFRGVRWRGCAGRWVCKVRVPGSRGDRFWIGTSDTAEETARTHDAAMLALCGASASLNFA. Positions 131 to 153 are disordered; sequence RRVPAPGRGSTATATATSGDAAS. Positions 134 to 153 are enriched in low complexity; the sequence is PAPGRGSTATATATSGDAAS.

It belongs to the AP2/ERF transcription factor family. ERF subfamily.

The protein resides in the nucleus. Transcriptional activator that binds specifically to the DNA sequence 5'-[AG]CCGAC-3'. Binding to the C-repeat/DRE element mediates high salinity- and dehydration-inducible transcription. The chain is Dehydration-responsive element-binding protein 1D (DREB1D) from Oryza sativa subsp. indica (Rice).